We begin with the raw amino-acid sequence, 673 residues long: MCSRVPLLLPLLLLLALGPGVQGCPSGCQCSQPQTVFCTARQGTTVPRDVPPDTVGLYVFENGITMLDAGSFAGLPGLQLLDLSQNQIASLPSGVFQPLANLSNLDLTANRLHEITNETFRGLRRLERLYLGKNRIRHIQPGAFDTLDRLLELKLQDNELRALPPLRLPRLLLLDLSHNSLLALEPGILDTANVEALRLAGLGLQQLDEGLFSRLRNLHDLDVSDNQLERVPPVIRGLRGLTRLRLAGNTRIAQLRPEDLAGLAALQELDVSNLSLQALPGDLSGLFPRLRLLAAARNPFNCVCPLSWFGPWVRESHVTLASPEETRCHFPPKNAGRLLLELDYADFGCPATTTTATVPTTRPVVREPTALSSSLAPTWLSPTEPATEAPSPPSTAPPTVGPVPQPQDCPPSTCLNGGTCHLGTRHHLACLCPEGFTGLYCESQMGQGTRPSPTPVTPRPPRSLTLGIEPVSPTSLRVGLQRYLQGSSVQLRSLRLTYRNLSGPDKRLVTLRLPASLAEYTVTQLRPNATYSVCVMPLGPGRVPEGEEACGEAHTPPAVHSNHAPVTQAREGNLPLLIAPALAAVLLAALAAVGAAYCVRRGRAMAAAAQDKGQVGPGAGPLELEGVKVPLEPGPKATEGGGEALPSGSECEVPLMGFPGPGLQSPLHAKPYI.

The N-terminal stretch at 1-23 (MCSRVPLLLPLLLLLALGPGVQG) is a signal peptide. Residues 24-51 (CPSGCQCSQPQTVFCTARQGTTVPRDVP) form the LRRNT domain. Residues 24-575 (CPSGCQCSQP…VTQAREGNLP (552 aa)) are Extracellular-facing. LRR repeat units lie at residues 52–74 (PDTV…SFAG), 77–98 (GLQL…VFQP), 101–122 (NLSN…TFRG), 125–146 (RLER…AFDT), 149–170 (RLLE…RLPR), 171–191 (LLLL…ILDT), 193–214 (NVEA…LFSR), 217–238 (NLHD…IRGL), 240–262 (GLTR…DLAG), and 265–287 (ALQE…SGLF). Asparagine 101 carries N-linked (GlcNAc...) asparagine glycosylation. N-linked (GlcNAc...) (complex) asparagine glycosylation occurs at asparagine 117. Residue asparagine 273 is glycosylated (N-linked (GlcNAc...) asparagine). One can recognise an LRRCT domain in the interval 298 to 351 (NPFNCVCPLSWFGPWVRESHVTLASPEETRCHFPPKNAGRLLLELDYADFGCPA). Residues 358–370 (VPTTRPVVREPTA) show a composition bias toward low complexity. Residues 358–404 (VPTTRPVVREPTALSSSLAPTWLSPTEPATEAPSPPSTAPPTVGPVP) form a disordered region. The span at 390–404 (PSPPSTAPPTVGPVP) shows a compositional bias: pro residues. The region spanning 405 to 442 (QPQDCPPSTCLNGGTCHLGTRHHLACLCPEGFTGLYCE) is the EGF-like domain. 3 disulfide bridges follow: cysteine 409/cysteine 420, cysteine 414/cysteine 430, and cysteine 432/cysteine 441. The region spanning 460-558 (PPRSLTLGIE…ACGEAHTPPA (99 aa)) is the Fibronectin type-III domain. N-linked (GlcNAc...) asparagine glycosylation is found at asparagine 500 and asparagine 528. A helical transmembrane segment spans residues 576–596 (LLIAPALAAVLLAALAAVGAA). Over 597–673 (YCVRRGRAMA…QSPLHAKPYI (77 aa)) the chain is Cytoplasmic.

In terms of assembly, interacts with TGFB1, TGFB2 and TGFB3. N-glycosylated. N-glycan heterogeneity at Asn-117: Hex5HexNAc4 (minor), dHex1Hex5HexNAc4 (major), Hex6HexNAc5 (minor) and dHex1Hex6HexNAc5 (minor). In terms of tissue distribution, expressed at highest levels in aorta, at intermediate levels in kidney and placenta and at lowest levels in brain, heart, liver, lung and skeletal muscle. Within the aorta, the strongest expression is found in the tunica media of the proximal ascending aorta, the descending thoracic aorta, the abdominal aorta and the coronary arteries. Within the kidney, expression is found in the interstitial cells.

The protein resides in the membrane. It is found in the secreted. In terms of biological role, may act as an inhibitor of TGF-beta signaling. This Homo sapiens (Human) protein is Vasorin (VASN).